A 529-amino-acid chain; its full sequence is T-complex protein 1 subunit delta (529 aa).

The protein belongs to the TCP-1 chaperonin family. As to quaternary structure, heterooligomeric complex of about 850 to 900 kDa that forms two stacked rings, 12 to 16 nm in diameter.

It is found in the cytoplasm. In terms of biological role, molecular chaperone; assists the folding of proteins upon ATP hydrolysis. Known to play a role, in vitro, in the folding of actin and tubulin. In Eremothecium gossypii (strain ATCC 10895 / CBS 109.51 / FGSC 9923 / NRRL Y-1056) (Yeast), this protein is T-complex protein 1 subunit delta (CCT4).